The primary structure comprises 907 residues: Catenin alpha-1 (907 aa).

Thr2 bears the N-acetylthreonine mark. Residues 2-228 are involved in homodimerization; the sequence is TAVHAGNINF…PILYTASQAC (227 aa). Residue Lys57 forms a Glycyl lysine isopeptide (Lys-Gly) (interchain with G-Cter in SUMO2) linkage. An interaction with JUP and CTNNB1 region spans residues 97–148; that stretch reads VRKQGDLMKSAAGEFADDPCSSVKRGNMVRAARALLSAVTRLLILADMADVY. Phosphoserine is present on residues Ser264, Ser268, Ser296, and Ser298. Residues 326 to 395 are interaction with alpha-actinin; that stretch reads TRDDRRERIV…AVMDHVSDSF (70 aa). Thr635 carries the phosphothreonine modification. A Phosphoserine modification is found at Ser642. Thr646 is subject to Phosphothreonine. A phosphoserine mark is found at Ser653 and Ser656. Phosphothreonine is present on Thr659. A Glycyl lysine isopeptide (Lys-Gly) (interchain with G-Cter in SUMO2) cross-link involves residue Lys798. Ser852 carries the phosphoserine modification. Basic and acidic residues predominate over residues 865 to 881; sequence PEKKPLVKREKQDETQT. The tract at residues 865–895 is disordered; the sequence is PEKKPLVKREKQDETQTKIKRASQKKHVNPV. Basic residues predominate over residues 882–892; it reads KIKRASQKKHV.

This sequence belongs to the vinculin/alpha-catenin family. In terms of assembly, monomer and homodimer; the monomer preferentially binds to CTNNB1 and the homodimer to actin. Component of an cadherin:catenin adhesion complex composed of at least of CDH26, beta-catenin/CTNNB1, alpha-catenin/CTNNA1 and p120 catenin/CTNND1. Possible component of an E-cadherin/ catenin adhesion complex together with E-cadherin/CDH1 and beta-catenin/CTNNB1 or gamma-catenin/JUP; the complex is located to adherens junctions. The stable association of CTNNA1 is controversial as CTNNA1 was shown not to bind to F-actin when assembled in the complex. Alternatively, the CTNNA1-containing complex may be linked to F-actin by other proteins such as LIMA1. Binds AFDN and F-actin. Interacts with ARHGAP21. Interacts with AJUBA. Interacts with LIMA1. Interacts with vinculin/VCL. Interacts with TJP2/ZO2 (via N-terminus). Interacts with TJP1/ZO1 (via N-terminus). Post-translationally, sumoylated. Phosphorylation seems to contribute to the strength of cell-cell adhesion rather than to the basic capacity for cell-cell adhesion.

It localises to the cytoplasm. Its subcellular location is the cytoskeleton. It is found in the cell junction. The protein resides in the adherens junction. The protein localises to the cell membrane. It localises to the nucleus. Associates with the cytoplasmic domain of a variety of cadherins. The association of catenins to cadherins produces a complex which is linked to the actin filament network, and which seems to be of primary importance for cadherins cell-adhesion properties. Can associate with both E- and N-cadherins. Originally believed to be a stable component of E-cadherin/catenin adhesion complexes and to mediate the linkage of cadherins to the actin cytoskeleton at adherens junctions. In contrast, cortical actin was found to be much more dynamic than E-cadherin/catenin complexes and CTNNA1 was shown not to bind to F-actin when assembled in the complex suggesting a different linkage between actin and adherens junctions components. The homodimeric form may regulate actin filament assembly and inhibit actin branching by competing with the Arp2/3 complex for binding to actin filaments. Involved in the regulation of WWTR1/TAZ, YAP1 and TGFB1-dependent SMAD2 and SMAD3 nuclear accumulation. May play a crucial role in cell differentiation. This Oryctolagus cuniculus (Rabbit) protein is Catenin alpha-1.